The chain runs to 320 residues: Cytochrome f (320 aa).

The N-terminal stretch at 1–35 (MQTRNTFSWIREEITRSISVSLMIYIITWASISSA) is a signal peptide. Heme is bound by residues Tyr36, Cys56, Cys59, and His60. A helical membrane pass occupies residues 286 to 306 (VQGLLFFLGSVVLAQIFLVLK).

It belongs to the cytochrome f family. The 4 large subunits of the cytochrome b6-f complex are cytochrome b6, subunit IV (17 kDa polypeptide, petD), cytochrome f and the Rieske protein, while the 4 small subunits are PetG, PetL, PetM and PetN. The complex functions as a dimer. It depends on heme as a cofactor.

The protein resides in the plastid. The protein localises to the chloroplast thylakoid membrane. Functionally, component of the cytochrome b6-f complex, which mediates electron transfer between photosystem II (PSII) and photosystem I (PSI), cyclic electron flow around PSI, and state transitions. The polypeptide is Cytochrome f (Lepidium virginicum (Virginia pepperweed)).